The following is a 93-amino-acid chain: Putative pterin-4-alpha-carbinolamine dehydratase (93 aa).

This sequence belongs to the pterin-4-alpha-carbinolamine dehydratase family.

It catalyses the reaction (4aS,6R)-4a-hydroxy-L-erythro-5,6,7,8-tetrahydrobiopterin = (6R)-L-erythro-6,7-dihydrobiopterin + H2O. This Roseiflexus sp. (strain RS-1) protein is Putative pterin-4-alpha-carbinolamine dehydratase.